The sequence spans 450 residues: Sensor histidine kinase EnvZ (450 aa).

Residues 1–15 (MRRMRFSPRSSFART) are Cytoplasmic-facing. The helical transmembrane segment at 16 to 35 (LLLIVTLLFVSLVTTYLVVL) threads the bilayer. At 36-158 (NFAILPSLQQ…LTEIHQGDFS (123 aa)) the chain is on the periplasmic side. Residues 159–179 (PLFRYTLAIMLLAIGGAWLFI) traverse the membrane as a helical segment. In terms of domain architecture, HAMP spans 180–232 (RIQNRPLVDLEHAALQVGKGIIPPPLREYGASEVRSVTRAFNHMAAGVKQLAD). At 180–450 (RIQNRPLVDL…ARVQGTTKEA (271 aa)) the chain is on the cytoplasmic side. A cytoplasmic dimerization domain (CDD), when dimerized forms osmosensitive core region spans residues 223–289 (MAAGVKQLAD…IIEQFIDYLR (67 aa)). The Histidine kinase domain maps to 240 to 440 (GVSHDLRTPL…SIRAWLPVPV (201 aa)). ATP contacts are provided by residues histidine 243, 347–351 (NAARY), aspartate 373, 392–393 (RG), and 402–406 (TGLGL). A Phosphohistidine; by autocatalysis modification is found at histidine 243.

In terms of assembly, homodimer. In terms of processing, autophosphorylated.

Its subcellular location is the cell inner membrane. It catalyses the reaction ATP + protein L-histidine = ADP + protein N-phospho-L-histidine.. Its function is as follows. Member of the two-component regulatory system EnvZ/OmpR involved in regulating expression of the outer membrane porins OmpC and OmpF as well as other genes. Unlike E.coli or S.typhimurium both porins are expressed constitutively. Involved in regulation of the biosynthesis of Vi polysaccharide, a capsular antigen thought to be involved in the virulence of S.typhi. Vi antigen is synthesized at low NaCl concentrations (under 0.4 M). EnvZ functions as a membrane-associated protein kinase that phosphorylates OmpR in response to environmental signals. This is Sensor histidine kinase EnvZ (envZ) from Salmonella typhi.